The following is a 212-amino-acid chain: Pyrrolidone-carboxylate peptidase (212 aa).

Active-site residues include E80, C143, and H165.

It belongs to the peptidase C15 family. Homotetramer.

The protein localises to the cytoplasm. It carries out the reaction Release of an N-terminal pyroglutamyl group from a polypeptide, the second amino acid generally not being Pro.. Its function is as follows. Removes 5-oxoproline from various penultimate amino acid residues except L-proline. The chain is Pyrrolidone-carboxylate peptidase from Vibrio vulnificus (strain YJ016).